The following is a 273-amino-acid chain: DnaJ homolog subfamily C member 27 (273 aa).

Positions 1-18 (MEANMPKRKEPGRSLRIK) are required for interaction with MAPK1. GTP contacts are provided by residues 23–30 (GNAEVGKS), 71–75 (DMAGH), and 134–137 (NKID). A J domain is found at 217–273 (GSWDMLGVKPGASRDEVNKACRKLAVLLHPDKCVAPGSEDAFKAVVNARTALLKNIK).

This sequence belongs to the small GTPase superfamily. Rab family. As to quaternary structure, interacts directly with MAPK1 (wild-type and kinase-deficient forms). Interacts directly (in GTP-bound form) with MAP2K1 (wild-type and kinase-deficient forms).

It is found in the nucleus. Its function is as follows. GTPase which can activate the MEK/ERK pathway and induce cell transformation when overexpressed. May act as a nuclear scaffold for MAPK1, probably by association with MAPK1 nuclear export signal leading to enhanced ERK1/ERK2 signaling. The sequence is that of DnaJ homolog subfamily C member 27 (DNAJC27) from Pongo abelii (Sumatran orangutan).